Here is a 149-residue protein sequence, read N- to C-terminus: HMG1/2-like protein (149 aa).

Basic and acidic residues-rich tracts occupy residues M1–T15 and K35–K44. Disordered regions lie at residues M1 to F52 and A112 to D149. A DNA-binding region (HMG box) is located at residues P45–N114. Acidic residues predominate over residues N134–D149.

It belongs to the HMGB family.

The protein resides in the nucleus. In Vicia faba (Broad bean), this protein is HMG1/2-like protein.